The primary structure comprises 121 residues: Large ribosomal subunit protein bL12 (121 aa).

The protein belongs to the bacterial ribosomal protein bL12 family. Homodimer. Part of the ribosomal stalk of the 50S ribosomal subunit. Forms a multimeric L10(L12)X complex, where L10 forms an elongated spine to which 2 to 4 L12 dimers bind in a sequential fashion. Binds GTP-bound translation factors.

In terms of biological role, forms part of the ribosomal stalk which helps the ribosome interact with GTP-bound translation factors. Is thus essential for accurate translation. This chain is Large ribosomal subunit protein bL12, found in Xanthomonas axonopodis pv. citri (strain 306).